The primary structure comprises 349 residues: DNA-directed RNA polymerase subunit alpha (349 aa).

The tract at residues 1–226 is alpha N-terminal domain (alpha-NTD); sequence MLIAQRPTLV…GLFGLAQELN (226 aa). The tract at residues 241–349 is alpha C-terminal domain (alpha-CTD); sequence AALAADLALP…GAEFVETEQY (109 aa). The segment at 308 to 349 is disordered; the sequence is LKDSPPGFDPRQAVDTYGTDSYNPAFSDPSDDGAEFVETEQY. A compositionally biased stretch (acidic residues) spans 336-349; the sequence is PSDDGAEFVETEQY.

The protein belongs to the RNA polymerase alpha chain family. In terms of assembly, homodimer. The RNAP catalytic core consists of 2 alpha, 1 beta, 1 beta' and 1 omega subunit. When a sigma factor is associated with the core the holoenzyme is formed, which can initiate transcription.

The catalysed reaction is RNA(n) + a ribonucleoside 5'-triphosphate = RNA(n+1) + diphosphate. Functionally, DNA-dependent RNA polymerase catalyzes the transcription of DNA into RNA using the four ribonucleoside triphosphates as substrates. The chain is DNA-directed RNA polymerase subunit alpha from Frankia alni (strain DSM 45986 / CECT 9034 / ACN14a).